Consider the following 637-residue polypeptide: Chaperone protein HtpG (637 aa).

An a; substrate-binding region spans residues 1 to 330; the sequence is MATAPASHAF…TEDLPLNISR (330 aa). Positions 331-551 are b; it reads ETLQENVVVR…GGASTSSMDR (221 aa). Residues 552–637 form a c region; it reads LLRVLHKDES…GDWYKAVRGL (86 aa).

Belongs to the heat shock protein 90 family. Homodimer.

It localises to the cytoplasm. Molecular chaperone. Has ATPase activity. This is Chaperone protein HtpG from Nitratidesulfovibrio vulgaris (strain ATCC 29579 / DSM 644 / CCUG 34227 / NCIMB 8303 / VKM B-1760 / Hildenborough) (Desulfovibrio vulgaris).